The sequence spans 443 residues: Cobyrinate a,c-diamide synthase (443 aa).

The region spanning 244 to 435 is the GATase cobBQ-type domain; it reads KVSVAMDSAF…AHIHFLSNPR (192 aa). C327 serves as the catalytic Nucleophile.

This sequence belongs to the CobB/CbiA family. The cofactor is Mg(2+).

The catalysed reaction is cob(II)yrinate + 2 L-glutamine + 2 ATP + 2 H2O = cob(II)yrinate a,c diamide + 2 L-glutamate + 2 ADP + 2 phosphate + 2 H(+). The protein operates within cofactor biosynthesis; adenosylcobalamin biosynthesis; cob(II)yrinate a,c-diamide from sirohydrochlorin (anaerobic route): step 10/10. In terms of biological role, catalyzes the ATP-dependent amidation of the two carboxylate groups at positions a and c of cobyrinate, using either L-glutamine or ammonia as the nitrogen source. This is Cobyrinate a,c-diamide synthase from Thermoplasma acidophilum (strain ATCC 25905 / DSM 1728 / JCM 9062 / NBRC 15155 / AMRC-C165).